A 373-amino-acid polypeptide reads, in one-letter code: LIM domain-binding protein 2 (373 aa).

Disordered stretches follow at residues 244–287 (APPA…KTPA) and 327–373 (QYDA…QASQ). A compositionally biased stretch (low complexity) spans 263-280 (STSSTSNSSAGNTTNSAG). One can recognise an LIM interaction domain (LID) domain in the interval 298-337 (DVMVVGEPTLMGGEFGDEDERLITRLENTQYDAANGMDDE). Positions 341–373 (NNSPALGNNSPWNSKPPATQETKSENAPPQASQ) are enriched in polar residues.

The protein belongs to the LDB family. In terms of assembly, interacts with LHX9. Interacts with SLK; leading to negatively regulate SLK kinase activity. Interacts with LMO4. Interacts with PITX1. Interacts with LHX3. Post-translationally, ubiquitinated by RLIM/RNF12, leading to its degradation by the proteasome. In terms of tissue distribution, expressed in multiple tissues including heart, brain, liver, kidney, testis, lung and muscle, with expression highest in the brain, trigeminal ganglia, and lung.

Its subcellular location is the nucleus. Its function is as follows. Transcription cofactor. Binds to the LIM domain of a wide variety of LIM domain-containing transcription factors. Functionally, regulates the transcriptional activity of LIM-containing proteins such as LHX3 or PITX1. The polypeptide is LIM domain-binding protein 2 (Ldb2) (Mus musculus (Mouse)).